Reading from the N-terminus, the 360-residue chain is Peptide chain release factor 1 (360 aa).

Q235 carries the N5-methylglutamine modification.

Belongs to the prokaryotic/mitochondrial release factor family. Post-translationally, methylated by PrmC. Methylation increases the termination efficiency of RF1.

Its subcellular location is the cytoplasm. Peptide chain release factor 1 directs the termination of translation in response to the peptide chain termination codons UAG and UAA. The sequence is that of Peptide chain release factor 1 from Delftia acidovorans (strain DSM 14801 / SPH-1).